The primary structure comprises 829 residues: Isethionate sulfite-lyase (829 aa).

A PFL domain is found at 31–699 (ERVFNILDSF…VVSATPNGRL (669 aa)). 2-hydroxyethane-1-sulfonate contacts are provided by residues Arg-188, Gln-192, 467–469 (CTE), and Arg-677. Cys-467 (cysteine radical intermediate) is an active-site residue. The active-site Proton acceptor is Glu-469. The 124-residue stretch at 706 to 829 (DGSSASHGAD…LIARTQHDAM (124 aa)) folds into the Glycine radical domain. Residue Gly-804 is modified to Glycine radical.

The protein belongs to the glycyl radical enzyme (GRE) family. In terms of assembly, homodimer. Requires the activating protein IslB to generate the key active site glycyl radical on Gly-804 that is involved in catalysis.

The enzyme catalyses 2-hydroxyethane-1-sulfonate = acetaldehyde + sulfite + H(+). It participates in organosulfur degradation; alkanesulfonate degradation. In terms of biological role, involved in an anaerobic respiration pathway that converts the sulfonate isethionate (2-hydroxyethanesulfonate) to ammonia, acetate and sulfide. Catalyzes the radical-mediated C-S bond cleavage of isethionate (2-hydroxyethanesulfonate) to form sulfite and acetaldehyde. This Oleidesulfovibrio alaskensis (strain ATCC BAA-1058 / DSM 17464 / G20) (Desulfovibrio alaskensis) protein is Isethionate sulfite-lyase.